We begin with the raw amino-acid sequence, 223 residues long: Immediate early response gene 2 protein (223 aa).

Position 1 is an N-acetylmethionine (Met-1). A disordered region spans residues 63–172; that stretch reads AALPSDPRLH…PPAQAEGAFP (110 aa). Over residues 69 to 78 the composition is skewed to basic and acidic residues; it reads PRLHPPREAE. Low complexity predominate over residues 125 to 138; the sequence is SSLSDGGDAGLVPS.

The protein belongs to the IER family. In terms of tissue distribution, expressed in activated T-cells (at protein level). Expression increases in metastatic tumor cells (at protein level).

Its subcellular location is the cytoplasm. The protein resides in the nucleus. In terms of biological role, DNA-binding protein that seems to act as a transcription factor. Involved in the regulation of neuronal differentiation, acts upon JNK-signaling pathway activation and plays a role in neurite outgrowth in hippocampal cells. May mediate with FIBP FGF-signaling in the establishment of laterality in the embryo. Promotes cell motility, seems to stimulate tumor metastasis. In Homo sapiens (Human), this protein is Immediate early response gene 2 protein.